We begin with the raw amino-acid sequence, 396 residues long: Homoserine O-acetyltransferase (396 aa).

Positions asparagine 53–glutamate 370 constitute an AB hydrolase-1 domain. Catalysis depends on serine 158, which acts as the Nucleophile. Arginine 228 contributes to the substrate binding site. Active-site residues include aspartate 331 and histidine 364. Residue aspartate 365 participates in substrate binding.

This sequence belongs to the AB hydrolase superfamily. MetX family. In terms of assembly, homodimer.

It localises to the cytoplasm. The enzyme catalyses L-homoserine + acetyl-CoA = O-acetyl-L-homoserine + CoA. It functions in the pathway amino-acid biosynthesis; L-methionine biosynthesis via de novo pathway; O-acetyl-L-homoserine from L-homoserine: step 1/1. Its function is as follows. Transfers an acetyl group from acetyl-CoA to L-homoserine, forming acetyl-L-homoserine. This is Homoserine O-acetyltransferase from Gluconobacter oxydans (strain 621H) (Gluconobacter suboxydans).